The sequence spans 116 residues: MSVIIYHNPHCSKSRETLALLENKGIQPIIELYLQKQYSVNELQSIAKKLGIDDVRQMMRTKDELYKSLNLDNLDLSQAELFKAISEHSALIERPIVINGDKAKIGRPPETVLEIL.

The active-site Nucleophile; cysteine thioarsenate intermediate is the Cys11.

Belongs to the ArsC family.

It catalyses the reaction [glutaredoxin]-dithiol + arsenate + glutathione + H(+) = glutathionyl-S-S-[glutaredoxin] + arsenite + H2O. In terms of biological role, involved in resistance to arsenate. Catalyzes the reduction of arsenate [As(V)] to arsenite [As(III)]. The protein is Arsenate reductase (arsC) of Haemophilus influenzae (strain ATCC 51907 / DSM 11121 / KW20 / Rd).